A 291-amino-acid chain; its full sequence is Energy-coupling factor transporter ATP-binding protein EcfA2 (291 aa).

Positions 3–246 constitute an ABC transporter domain; the sequence is ITFKDVSYTY…PEWLTSKQLG (244 aa). 40–47 contributes to the ATP binding site; that stretch reads GHTGSGKS.

It belongs to the ABC transporter superfamily. Energy-coupling factor EcfA family. Forms a stable energy-coupling factor (ECF) transporter complex composed of 2 membrane-embedded substrate-binding proteins (S component), 2 ATP-binding proteins (A component) and 2 transmembrane proteins (T component).

Its subcellular location is the cell membrane. In terms of biological role, ATP-binding (A) component of a common energy-coupling factor (ECF) ABC-transporter complex. Unlike classic ABC transporters this ECF transporter provides the energy necessary to transport a number of different substrates. The protein is Energy-coupling factor transporter ATP-binding protein EcfA2 of Latilactobacillus sakei subsp. sakei (strain 23K) (Lactobacillus sakei subsp. sakei).